The primary structure comprises 1098 residues: Ubiquitin carboxyl-terminal hydrolase 36 (1098 aa).

Basic and acidic residues predominate over residues 72-86 (RHRSGDELQARKPGT). A disordered region spans residues 72 to 97 (RHRSGDELQARKPGTERVSGSGGDGV). The region spanning 122-423 (AGLHNLGNTC…QAYVLFYLRI (302 aa)) is the USP domain. Residue C131 is the Nucleophile of the active site. H382 functions as the Proton acceptor in the catalytic mechanism. Disordered stretches follow at residues 428–464 (KSPEGPVSRVGATLPSRPKVVPEHSKKSPGNGVVPSP) and 483–574 (EVGV…RDTI). Phosphoserine is present on residues S429, S463, S547, and S578. A compositionally biased stretch (low complexity) spans 540-558 (PLQSLTTSPTTSQGSPGTG). Residues 589–640 (GHRLKGEGSGVDLEKGDSSSSSPEHSASSDPAKAPQTAESRAAHACDSQGTN) form a disordered region. Over residues 606–617 (SSSSSPEHSASS) the composition is skewed to low complexity. Phosphoserine is present on S663. Disordered regions lie at residues 664–710 (PALS…SPSA) and 722–973 (HPVV…ALSV). The span at 665-677 (ALSSTTTEPTSLM) shows a compositional bias: polar residues. S678 is modified (phosphoserine). Low complexity predominate over residues 683-692 (KKLALSAKKA). Position 709 is a phosphoserine (S709). A compositionally biased stretch (low complexity) spans 746–763 (HPHSASLSSSSAKPLGTS). Polar residues predominate over residues 853 to 878 (GQFQDQSWSSGSQKEEGTQPQVNGHQ). A compositionally biased stretch (basic residues) spans 889 to 898 (SSRKRRKRKR). Residues 901 to 917 (GLSQEATPSQDLIQHSC) show a composition bias toward polar residues. The span at 921–932 (DHSEPEARTELQ) shows a compositional bias: basic and acidic residues. Residues 933 to 943 (KKKKKKRRKRK) show a composition bias toward basic residues. A compositionally biased stretch (basic and acidic residues) spans 944-960 (PEPQQDEESKHPGDQRS).

It belongs to the peptidase C19 family. As to quaternary structure, interacts with isoform 3 of FBXW7; the interaction inhibits MYC degradation induced by SCF(FBW7) complex. Interacts with NTRK1; USP36 does not deubiquitinate NTRK1. Interacts with NEDD4L (via domains WW1, 3 and 4); the interaction inhibits ubiquitination of, at least, NTRK1, KCNQ2 and KCNQ3 by NEDD4L. Interacts (via C-terminus) with EXOSC10 (via C-terminus); the interaction is facilitated by the association with RNA and promotes sumoylation of EXOSC10. Post-translationally, polyubiquitinated by NEDD4L, no effect on USP36 protein levels. Both proteins interact with and regulate each other's ubiquitination levels.

The protein resides in the nucleus. It is found in the nucleolus. The protein localises to the cytoplasm. The catalysed reaction is Thiol-dependent hydrolysis of ester, thioester, amide, peptide and isopeptide bonds formed by the C-terminal Gly of ubiquitin (a 76-residue protein attached to proteins as an intracellular targeting signal).. Functionally, deubiquitinase essential for the regulation of nucleolar structure and function. Required for cell and organism viability. Plays an important role in ribosomal RNA processing and protein synthesis, which is mediated, at least in part, through deubiquitination of DHX33, NPM1 and FBL, regulating their protein stability. Functions as a transcriptional repressor by deubiquiting histone H2B at the promoters of genes critical for cellular differentiation, such as CDKN1A, thereby preventing histone H3 'Lys-4' trimethylation (H3K4). Specifically deubiquitinates MYC in the nucleolus, leading to prevent MYC degradation by the proteasome: acts by specifically interacting with isoform 3 of FBXW7 (FBW7gamma) in the nucleolus and counteracting ubiquitination of MYC by the SCF(FBW7) complex. In contrast, it does not interact with isoform 1 of FBXW7 (FBW7alpha) in the nucleoplasm. Interacts to and regulates the actions of E3 ubiquitin-protein ligase NEDD4L over substrates such as NTRK1, KCNQ2 and KCNQ3, affecting their expression an functions. Deubiquitinates SOD2, regulates SOD2 protein stability. Deubiquitinase activity is required to control selective autophagy activation by ubiquitinated proteins. Promotes CEP63 stabilization through 'Lys-48'-linked deubiquitination leading to increased stability. Acts as a SUMO ligase to promote EXOSC10 sumoylation critical for the nucleolar RNA exosome function in rRNA processing. Binds to pre-rRNAs. This Mus musculus (Mouse) protein is Ubiquitin carboxyl-terminal hydrolase 36 (Usp36).